The following is a 574-amino-acid chain: Galectin-3-binding protein (574 aa).

The first 18 residues, 1–18 (MALLWLLSVFLLVPGTQG), serve as a signal peptide directing secretion. Residues 24 to 124 (MRLVNGASAS…HEKDAGVVCS (101 aa)) enclose the SRCR domain. 3 disulfides stabilise this stretch: C49-C113, C62-C123, and C93-C103. 4 N-linked (GlcNAc...) asparagine glycosylation sites follow: N69, N96, N102, and N125. The BTB domain occupies 153-221 (CDLFIQVTGQ…FYSRRIEVSM (69 aa)). The BACK domain maps to 260–360 (PLELYEYAQA…MLPQELFELQ (101 aa)). N-linked (GlcNAc...) asparagine glycosylation is found at N362, N398, N540, and N569.

As to quaternary structure, homodimers and homomultimers. The multimers form ring-like structures with a diameter of 30-40 nm. Binds LGALS1 and LGALS3. Binds ITGB1, COL4A1, COL5A1, COL6A1, FN1 and NID. The unglycosylated form interacts with PDE4DIP; this interaction, which is PDE4DIP isoform-specific, may connect a pericentrosomal complex to the gamma-tubulin ring complex (gamma-TuRC) to promote microtubule assembly and acetylation. Detected in thyroid (at protein level).

It localises to the secreted. The protein resides in the extracellular space. The protein localises to the extracellular matrix. In terms of biological role, promotes integrin-mediated cell adhesion. May stimulate host defense against viruses and tumor cells. The sequence is that of Galectin-3-binding protein (Lgals3bp) from Rattus norvegicus (Rat).